Consider the following 513-residue polypeptide: E3 ubiquitin-protein ligase RNF25 (513 aa).

The RWD domain occupies 9-117; sequence SEIEVLQSIY…ERAKEILTDS (109 aa). Positions 124, 127, 142, 144, 147, 150, 187, and 190 each coordinate Zn(2+). The segment at 124-191 adopts an RING-type; atypical zinc-finger fold; that stretch reads CVICLYDFKE…ELAVVCPVCR (68 aa). Positions 261-513 are disordered; the sequence is NLSDTPGMTD…EKEFRKEGVL (253 aa). The span at 271–297 shows a compositional bias: low complexity; it reads SSGAESSQSLPSSSPDSTSTTQTSQNQ. Polar residues-rich tracts occupy residues 345–397 and 406–423; these read SDKI…QDML and EVSQQKECISKEVTQTIL. The span at 426–440 shows a compositional bias: basic and acidic residues; sequence GHPEREHVGRGDKRG. The span at 482–498 shows a compositional bias: gly residues; sequence AGRGHRGGGAYRGGGRG. Residues 501–513 are compositionally biased toward basic and acidic residues; that stretch reads QRVEKEFRKEGVL.

This sequence belongs to the RNF25 family.

It localises to the cytoplasm. It carries out the reaction S-ubiquitinyl-[E2 ubiquitin-conjugating enzyme]-L-cysteine + [acceptor protein]-L-lysine = [E2 ubiquitin-conjugating enzyme]-L-cysteine + N(6)-ubiquitinyl-[acceptor protein]-L-lysine.. It functions in the pathway protein modification; protein ubiquitination. In terms of biological role, E3 ubiquitin-protein ligase that plays a key role in the RNF14-RNF25 translation quality control pathway, a pathway that takes place when a ribosome has stalled during translation, and which promotes ubiquitination and degradation of translation factors on stalled ribosomes. May also acts as a positive regulator of the Wnt signaling. The polypeptide is E3 ubiquitin-protein ligase RNF25 (Danio rerio (Zebrafish)).